The sequence spans 606 residues: Lysosomal cobalamin transporter ABCD4 (606 aa).

An ABC transmembrane type-1 domain is found at 39-332 (NVLMFMTLLC…CFTQLIDLST (294 aa)). 5 helical membrane-spanning segments follow: residues 43-63 (FMTL…VGLI), 76-96 (LDGF…NSTL), 190-210 (IFGY…PIVT), 279-299 (YLGS…GVYG), and 314-334 (AFVC…STTL). Residues 389–603 (LDRVSILAPS…GGGSWELTRI (215 aa)) enclose the ABC transporter domain. Position 421 to 428 (421 to 428 (GNTGTGKT)) interacts with ATP.

It belongs to the ABC transporter superfamily. ABCD family. Peroxisomal fatty acyl CoA transporter (TC 3.A.1.203) subfamily. In terms of assembly, homodimer or heterodimer. Interacts with LMBRD1; this interaction induces the translocation of ABCD4 from the ER to the lysosome membrane. Interacts with LMBRD1 and MMACHC; this interaction ensures the transport of cobalamin from the lysosome to the cytosol.

It localises to the endoplasmic reticulum membrane. The protein localises to the lysosome membrane. The catalysed reaction is an R-cob(III)alamin(out) + ATP + H2O = an R-cob(III)alamin(in) + ADP + phosphate + H(+). In terms of biological role, lysosomal membrane protein that transports cobalamin (Vitamin B12) from the lysosomal lumen to the cytosol in an ATP-dependent manner. Targeted by LMBRD1 lysosomal chaperone from the endoplasmic reticulum to the lysosomal membrane. Then forms a complex with lysosomal chaperone LMBRD1 and cytosolic MMACHC to transport cobalamin across the lysosomal membrane. In Mus musculus (Mouse), this protein is Lysosomal cobalamin transporter ABCD4.